Here is a 253-residue protein sequence, read N- to C-terminus: Large ribosomal subunit protein bL28m (253 aa).

The transit peptide at 1-55 directs the protein to the mitochondrion; that stretch reads MPLHKYPPALWDVLKLKDGIYARLPEHYRRSLLEKHKPYPVHWKPHGLKYRLNPK.

It belongs to the bacterial ribosomal protein bL28 family. Component of the mitochondrial ribosome large subunit (39S) which comprises a 16S rRNA and about 50 distinct proteins.

It is found in the mitochondrion. This chain is Large ribosomal subunit protein bL28m (mrpl28), found in Xenopus laevis (African clawed frog).